Reading from the N-terminus, the 83-residue chain is MKASRFLALAGLVLLFVVGYASESEEKEFPRELLSKIFAVDDFKGEERGCKGFGDSCTPGKNECCPNYACSSKHKWCKVYLGK.

An N-terminal signal peptide occupies residues 1-21 (MKASRFLALAGLVLLFVVGYA). Positions 22–48 (SESEEKEFPRELLSKIFAVDDFKGEER) are excised as a propeptide. Disulfide bonds link Cys-50–Cys-65, Cys-57–Cys-70, and Cys-64–Cys-77. Leu-81 is modified (leucine amide).

It belongs to the neurotoxin 10 (Hwtx-1) family. 15 (Hntx-3) subfamily. Monomer. In terms of tissue distribution, expressed by the venom gland.

It is found in the secreted. In terms of biological role, selective antagonist of neuronal tetrodotoxin (TTX)-sensitive voltage-gated sodium channels (IC(50)=1270 nM on Nav1.1/SCN1A, 270 nM on Nav1.2/SCN2A, 491 nM on Nav1.3/SCN3A and 232 nM on Nav1.7/SCN9A). This toxin suppress Nav1.7 current amplitude without significantly altering the activation, inactivation, and repriming kinetics. Short extreme depolarizations partially activate the toxin-bound channel, indicating voltage-dependent inhibition of this toxin. This toxin increases the deactivation of the Nav1.7 current after extreme depolarizations. The toxin-Nav1.7 complex is gradually dissociated upon prolonged strong depolarizations in a voltage-dependent manner, and the unbound toxin rebinds to Nav1.7 after a long repolarization. Moreover, analysis of chimeric channels showed that the DIIS3-S4 linker is critical for toxin binding to Nav1.7. These data are consistent with this toxin interacting with Nav1.7 site 4 and trapping the domain II voltage sensor in the closed state. The chain is Hainantoxin-III 5 from Cyriopagopus hainanus (Chinese bird spider).